Consider the following 153-residue polypeptide: MSLELALDVQYATTSDWLPTEEQLMLWAKTAIGNGMDRAELTIRIVDSRESQMLNSTYRGKDKPTNVLSFPFEAPAEIELPLLGDLVICAAVVENEAREQNKTLEAHWAHMVVHGCLHLLGYDHIEDEEAEEMESLETQLIESLGFTNPYKEQ.

3 residues coordinate Zn(2+): histidine 114, histidine 118, and histidine 124.

It belongs to the endoribonuclease YbeY family. Requires Zn(2+) as cofactor.

The protein localises to the cytoplasm. Its function is as follows. Single strand-specific metallo-endoribonuclease involved in late-stage 70S ribosome quality control and in maturation of the 3' terminus of the 16S rRNA. This chain is Endoribonuclease YbeY, found in Shewanella putrefaciens (strain CN-32 / ATCC BAA-453).